Here is a 160-residue protein sequence, read N- to C-terminus: MDYTLALALSLLQLSMCTPVPMMQDSGRMKTKAKWMVQQLLVRLKDNVWPHFDMPPTFSADDLEGSASIVARLENFNSLISDNLGDVLQIKAEISSLTGYLNNWRHNNCKEQRPRTAVPGLPQEPQRRKDFIQSVTIDALMSMKEFLNLLLQNLDHLEIC.

The signal sequence occupies residues 1-17 (MDYTLALALSLLQLSMC). Cys-109 and Cys-160 are oxidised to a cystine.

This sequence belongs to the leptin family.

It localises to the secreted. Its function is as follows. May function as part of a signaling pathway that acts to regulate the size of the body fat depot. This Tetraodon nigroviridis (Spotted green pufferfish) protein is Leptin (lep).